The primary structure comprises 305 residues: Glycine--tRNA ligase alpha subunit (305 aa).

This sequence belongs to the class-II aminoacyl-tRNA synthetase family. In terms of assembly, tetramer of two alpha and two beta subunits.

It localises to the cytoplasm. It carries out the reaction tRNA(Gly) + glycine + ATP = glycyl-tRNA(Gly) + AMP + diphosphate. The polypeptide is Glycine--tRNA ligase alpha subunit (Streptococcus suis (strain 98HAH33)).